A 158-amino-acid chain; its full sequence is EPGPSSDLTTLTTKFAAKGLTPSDLTVLSGGHTIGQSECQFFKTRIYNDTNIDTNFATSRQANCPFSAGGETNLAPLDSLTPNRFDNNYYKDLVSNRGLLHSDQVLFNGGSQDTLVRTYSTNNVKFFSDFAAAIVKMSKISPLTGIAGEIRKNCRVIN.

A substrate-binding site is contributed by P2. Heme b is bound at residue H32. Position 33 (T33) interacts with Ca(2+). An intrachain disulfide couples C39 to C64. A glycan (N-linked (GlcNAc...) asparagine) is linked at N48. Ca(2+)-binding residues include D78, T81, and D86.

The protein belongs to the peroxidase family. Classical plant (class III) peroxidase subfamily. The cofactor is Ca(2+). Heme b serves as cofactor.

The catalysed reaction is 2 a phenolic donor + H2O2 = 2 a phenolic radical donor + 2 H2O. Functionally, removal of H(2)O(2), oxidation of toxic reductants, biosynthesis and degradation of lignin, suberization, auxin catabolism, response to environmental stresses such as wounding, pathogen attack and oxidative stress. These functions might be dependent on each isozyme/isoform in each plant tissue. The protein is Peroxidase of Lupinus polyphyllus (Large-leaved lupine).